The chain runs to 349 residues: Flavonol synthase/flavanone 3-hydroxylase (349 aa).

A Fe2OG dioxygenase domain is found at 213-310; the sequence is DIVYMLKINY…RMSWPVFLEP (98 aa). Fe cation contacts are provided by His238, Asp240, and His291.

It belongs to the iron/ascorbate-dependent oxidoreductase family. Fe cation is required as a cofactor. It depends on L-ascorbate as a cofactor.

It is found in the cytoplasm. It catalyses the reaction a (2R,3R)-dihydroflavonol + 2-oxoglutarate + O2 = a flavonol + succinate + CO2 + H2O. It carries out the reaction a (2S)-flavan-4-one + 2-oxoglutarate + O2 = a (2R,3R)-dihydroflavonol + succinate + CO2. It participates in secondary metabolite biosynthesis; flavonoid biosynthesis. In terms of biological role, catalyzes the formation of flavonols from dihydroflavonols. It can act on dihydrokaempferol to produce kaempferol, on dihydroquercetin to produce quercitin and on dihydromyricetin to produce myricetin. The sequence is that of Flavonol synthase/flavanone 3-hydroxylase from Solanum tuberosum (Potato).